We begin with the raw amino-acid sequence, 754 residues long: Relaxin receptor 2 (754 aa).

At M1–N416 the chain is on the extracellular side. The region spanning S44–G81 is the LDL-receptor class A domain. Disulfide bonds link C45–C58, C52–C71, and C65–C80. N54 carries an N-linked (GlcNAc...) asparagine glycan. Residue N138 is glycosylated (N-linked (GlcNAc...) asparagine). LRR repeat units lie at residues N138–K159, K162–G183, N186–D207, Q210–G231, S234–Q255, Q258–S279, S282–S303, N306–D327, L330–S351, and Q354–P375. N-linked (GlcNAc...) asparagine glycosylation occurs at N274. The N-linked (GlcNAc...) asparagine glycan is linked to N335. N378 carries N-linked (GlcNAc...) asparagine glycosylation. A helical membrane pass occupies residues I417–I437. The Cytoplasmic portion of the chain corresponds to G438–K455. The helical transmembrane segment at I456 to I476 threads the bilayer. The Extracellular segment spans residues K477–C495. The cysteines at positions 495 and 573 are disulfide-linked. Residues R496–L518 traverse the membrane as a helical segment. Residues E519–Q537 lie on the Cytoplasmic side of the membrane. The helical transmembrane segment at T538–W558 threads the bilayer. At N559–G592 the chain is on the extracellular side. The helical transmembrane segment at I593–F613 threads the bilayer. Residues C614–R639 are Cytoplasmic-facing. Residues F640–L660 form a helical membrane-spanning segment. The Extracellular segment spans residues S661–T670. A helical transmembrane segment spans residues M671–Y691. Topologically, residues T692–S754 are cytoplasmic.

It belongs to the G-protein coupled receptor 1 family. As to expression, expressed mainly in the brain, kidney, muscle, testis, thyroid, uterus, peripheral blood cells and bone marrow.

The protein resides in the cell membrane. Its function is as follows. Receptor for relaxin. The activity of this receptor is mediated by G proteins leading to stimulation of adenylate cyclase and an increase of cAMP. May also be a receptor for Leydig insulin-like peptide (INSL3). This Homo sapiens (Human) protein is Relaxin receptor 2 (RXFP2).